A 76-amino-acid chain; its full sequence is UPF0291 protein GK1331 (76 aa).

Residues 57 to 76 form a disordered region; sequence PSGNDVTPKKLKESQRRRFH. A compositionally biased stretch (basic and acidic residues) spans 63 to 76; that stretch reads TPKKLKESQRRRFH.

This sequence belongs to the UPF0291 family.

The protein resides in the cytoplasm. The polypeptide is UPF0291 protein GK1331 (Geobacillus kaustophilus (strain HTA426)).